The primary structure comprises 179 residues: UPF0227 protein Sbal_2415 (179 aa).

The protein belongs to the UPF0227 family.

The sequence is that of UPF0227 protein Sbal_2415 from Shewanella baltica (strain OS155 / ATCC BAA-1091).